The chain runs to 76 residues: Beta-defensin 121 (76 aa).

Residues 1–15 form the signal peptide; that stretch reads MKLLLLLLTVTLLLA. 3 disulfides stabilise this stretch: cysteine 23–cysteine 50, cysteine 30–cysteine 44, and cysteine 34–cysteine 51.

It belongs to the beta-defensin family.

It is found in the secreted. Functionally, has antibacterial activity. The chain is Beta-defensin 121 (DEFB121) from Pan troglodytes (Chimpanzee).